The sequence spans 483 residues: ATP synthase subunit beta (483 aa).

169–176 (GGAGVGKT) contributes to the ATP binding site.

Belongs to the ATPase alpha/beta chains family. As to quaternary structure, F-type ATPases have 2 components, CF(1) - the catalytic core - and CF(0) - the membrane proton channel. CF(1) has five subunits: alpha(3), beta(3), gamma(1), delta(1), epsilon(1). CF(0) has three main subunits: a(1), b(2) and c(9-12). The alpha and beta chains form an alternating ring which encloses part of the gamma chain. CF(1) is attached to CF(0) by a central stalk formed by the gamma and epsilon chains, while a peripheral stalk is formed by the delta and b chains.

It localises to the cell membrane. The enzyme catalyses ATP + H2O + 4 H(+)(in) = ADP + phosphate + 5 H(+)(out). In terms of biological role, produces ATP from ADP in the presence of a proton gradient across the membrane. The catalytic sites are hosted primarily by the beta subunits. The chain is ATP synthase subunit beta from Rhodococcus jostii (strain RHA1).